A 538-amino-acid chain; its full sequence is Nicotinate phosphoribosyltransferase (538 aa).

Nicotinate is bound by residues Y21 and T210. Phosphohistidine is present on H213. R318 provides a ligand contact to nicotinate. T380 contacts 5-phospho-alpha-D-ribose 1-diphosphate.

The protein belongs to the NAPRTase family. As to quaternary structure, homodimer. The cofactor is Mg(2+). Requires Mn(2+) as cofactor. In terms of processing, transiently phosphorylated on a His residue during the reaction cycle. Phosphorylation strongly increases the affinity for substrates and increases the rate of nicotinate D-ribonucleotide production. Dephosphorylation regenerates the low-affinity form of the enzyme, leading to product release.

The protein resides in the cytoplasm. The protein localises to the cytosol. The catalysed reaction is nicotinate + 5-phospho-alpha-D-ribose 1-diphosphate + ATP + H2O = nicotinate beta-D-ribonucleotide + ADP + phosphate + diphosphate. The protein operates within cofactor biosynthesis; NAD(+) biosynthesis; nicotinate D-ribonucleotide from nicotinate: step 1/1. In terms of biological role, catalyzes the first step in the biosynthesis of NAD from nicotinic acid, the ATP-dependent synthesis of beta-nicotinate D-ribonucleotide from nicotinate and 5-phospho-D-ribose 1-phosphate. Helps prevent cellular oxidative stress via its role in NAD biosynthesis. The polypeptide is Nicotinate phosphoribosyltransferase (NAPRT) (Bos taurus (Bovine)).